The sequence spans 121 residues: Cell division protein FtsB (121 aa).

The Cytoplasmic portion of the chain corresponds to 1-6; sequence MRNWRW. Residues 7–24 form a helical membrane-spanning segment; it reads LLLVLAVLLAWLQYRFWF. Topologically, residues 25 to 121 are periplasmic; sequence GPGNSGEVMM…AASADPVDHP (97 aa). Residues 31 to 66 are a coiled coil; sequence EVMMLEAQVAHQTRDNEGLRQRNQALAAEVKDLKDG. The interval 98-121 is disordered; it reads PPAAQEAAPPAQPPAASADPVDHP.

This sequence belongs to the FtsB family. As to quaternary structure, part of a complex composed of FtsB, FtsL and FtsQ.

The protein localises to the cell inner membrane. Its function is as follows. Essential cell division protein. May link together the upstream cell division proteins, which are predominantly cytoplasmic, with the downstream cell division proteins, which are predominantly periplasmic. The polypeptide is Cell division protein FtsB (Xanthomonas campestris pv. campestris (strain 8004)).